Here is a 235-residue protein sequence, read N- to C-terminus: Exosome complex component RRP46 (235 aa).

Residues M1–A13 are compositionally biased toward basic and acidic residues. The tract at residues M1–P24 is disordered. A Phosphoserine modification is found at S20.

Belongs to the RNase PH family. As to quaternary structure, homodimer. Component of the RNA exosome core complex (Exo-9), composed of EXOSC1, EXOSC2, EXOSC3, EXOSC4, EXOSC5, EXOSC6, EXOSC7, EXOSC8 and EXOSC9; within the complex interacts with EXOSC3, EXOSC8, and EXOSC9. The catalytically inactive RNA exosome core complex (Exo-9) associates with the catalytic subunit EXOSC10/RRP6. Exo-9 may associate with DIS3 to form the nucleolar exosome complex, or DIS3L to form the cytoplasmic exosome complex. Exo-9 is formed by a hexameric base ring consisting of the heterodimers EXOSC4-EXOSC9, EXOSC5-EXOSC8 and EXOSC6-EXOSC7, and a cap ring consisting of EXOSC1, EXOSC2 and EXOSC3. The RNA exosome complex associates with cofactors C1D/RRP47, MPHOSPH6/MPP6 and MTREX/MTR4. Interacts with GTPBP1. Interacts with ZC3HAV1. Interacts with DDX17 only in the presence of ZC3HAV1 in an RNA-independent manner. In terms of tissue distribution, highly expressed in a variety of hematopoietic and epithelial tumor cell lines, but not in normal hematopoietic tissues or other normal tissue, with the exception of testis.

It is found in the nucleus. Its subcellular location is the nucleolus. The protein resides in the cytoplasm. In terms of biological role, non-catalytic component of the RNA exosome complex which has 3'-&gt;5' exoribonuclease activity and participates in a multitude of cellular RNA processing and degradation events. In the nucleus, the RNA exosome complex is involved in proper maturation of stable RNA species such as rRNA, snRNA and snoRNA, in the elimination of RNA processing by-products and non-coding 'pervasive' transcripts, such as antisense RNA species and promoter-upstream transcripts (PROMPTs), and of mRNAs with processing defects, thereby limiting or excluding their export to the cytoplasm. The RNA exosome may be involved in Ig class switch recombination (CSR) and/or Ig variable region somatic hypermutation (SHM) by targeting AICDA deamination activity to transcribed dsDNA substrates. In the cytoplasm, the RNA exosome complex is involved in general mRNA turnover and specifically degrades inherently unstable mRNAs containing AU-rich elements (AREs) within their 3' untranslated regions, and in RNA surveillance pathways, preventing translation of aberrant mRNAs. It seems to be involved in degradation of histone mRNA. The catalytic inactive RNA exosome core complex of 9 subunits (Exo-9) is proposed to play a pivotal role in the binding and presentation of RNA for ribonucleolysis, and to serve as a scaffold for the association with catalytic subunits and accessory proteins or complexes. In vitro, EXOSC5 does not bind or digest single-stranded RNA and binds to double-stranded DNA without detectable DNase activity. The chain is Exosome complex component RRP46 (EXOSC5) from Homo sapiens (Human).